A 718-amino-acid polypeptide reads, in one-letter code: MSSALDEDTQQTIAAGRETAGAMLRAAQKDLQKVFIVFLVGFLGTFYALRLYVWEFFRGVTKAQMDASVSGNVSIIAQTPFDVILLQAKIGLVVGVLFALPPFIYVSRGALKARDAWPKSPVAPWKLALIGLTMVALFAAGVAYGYFVFFPFTFAFLAQNAISAGFTPSYSIVKWAQFIFLLTLSFGLASQLPLAMTGLSYAEVVPYELFRDKWRHAIVGIFAFGALFTPPDPFTQIMWAVPVILLYAFSLYLARVVVTAKRGSEKIDVKSTATTHWNLLAGVGVVVGLLVYAFYEYGGVELANDGLAAIGSDYVFLAPGSGVALGAFVVAGGFVGLAFGLAYLVYRDIERLERTEIGVGDPTKLDLSALDVAGVRAAPPEAFADLEEDEVMALASAAIDDGDKAKAQALIDRFDEAEADREAEAADAEDEPGELEDRTTRAGGAFVSELTEGETDEDDIGGYYTDIAFIVDSLTSRAFWVVGWFMLVLATTFGWLYTGGIRDVYDDFLGRLPAAVRPEEVLNVVALHPMEALIFEVKFSTILAVLATLPLVAYFVWPALRERNIIRKRRRTVFVWTGALAGGLLGGFALGYTYVAPTVITFLVEDALAANMIITYRITNFFWLIFFTTAGIGLLADVPILMVLLNTAGISYRMMRNRWREVTVFILAISAVFTPASITTMFMVTLPLMAAYGVGLGVLFVLTVGGRRDLSPARGAAE.

8 consecutive transmembrane segments (helical) span residues 34–54 (VFIV…LYVW), 84–104 (ILLQ…PPFI), 137–157 (LFAA…FAFL), 178–198 (FIFL…AMTG), 214–231 (WRHA…FTPP), 234–254 (FTQI…LYLA), 280–300 (LAGV…YGGV), and 325–345 (LGAF…AYLV). Residues 421–451 (REAEAADAEDEPGELEDRTTRAGGAFVSELT) form a disordered region. Acidic residues predominate over residues 425 to 434 (AADAEDEPGE). A run of 6 helical transmembrane segments spans residues 478 to 498 (AFWV…WLYT), 539 to 559 (FSTI…VWPA), 572 to 592 (TVFV…ALGY), 621 to 641 (FFWL…VPIL), 661 to 681 (EVTV…ITTM), and 682 to 702 (FMVT…LFVL).

This sequence belongs to the TatC family. As to quaternary structure, forms a complex with TatA.

It localises to the cell membrane. Its function is as follows. Part of the twin-arginine translocation (Tat) system that transports large folded proteins containing a characteristic twin-arginine motif in their signal peptide across membranes. This chain is Sec-independent protein translocase protein TatCt, found in Haloferax volcanii (strain ATCC 29605 / DSM 3757 / JCM 8879 / NBRC 14742 / NCIMB 2012 / VKM B-1768 / DS2) (Halobacterium volcanii).